The primary structure comprises 309 residues: Methionyl-tRNA formyltransferase (309 aa).

Position 110–113 (110–113 (SLLP)) interacts with (6S)-5,6,7,8-tetrahydrofolate. Positions 289–309 (KRMAATDWARGSRIEQGERLK) are disordered. Positions 298–309 (RGSRIEQGERLK) are enriched in basic and acidic residues.

The protein belongs to the Fmt family.

It carries out the reaction L-methionyl-tRNA(fMet) + (6R)-10-formyltetrahydrofolate = N-formyl-L-methionyl-tRNA(fMet) + (6S)-5,6,7,8-tetrahydrofolate + H(+). Attaches a formyl group to the free amino group of methionyl-tRNA(fMet). The formyl group appears to play a dual role in the initiator identity of N-formylmethionyl-tRNA by promoting its recognition by IF2 and preventing the misappropriation of this tRNA by the elongation apparatus. This Saccharopolyspora erythraea (strain ATCC 11635 / DSM 40517 / JCM 4748 / NBRC 13426 / NCIMB 8594 / NRRL 2338) protein is Methionyl-tRNA formyltransferase.